We begin with the raw amino-acid sequence, 507 residues long: Dihydrolipoyl dehydrogenase 1, mitochondrial (507 aa).

The N-terminal 36 residues, 1–36 (MAMASLARRKAYFLTRNLSNSPTDALRFSFSLSRGF), are a transit peptide targeting the mitochondrion. FAD-binding positions include 73–82 (EKRGALGGTC), K91, G155, and 184–186 (TGS). A disulfide bridge links C82 with C87. Residues 221–228 (GAGYIGLE), E244, V278, and G313 each bind NAD(+). Residues D354 and 360-363 (MLAH) contribute to the FAD site. H486 functions as the Proton acceptor in the catalytic mechanism.

Belongs to the class-I pyridine nucleotide-disulfide oxidoreductase family. As to quaternary structure, homodimer. Part of both the glycine cleavage system composed of four proteins: P, T, L and H and of the pyruvate dehydrogenase complex containing multiple copies of three enzymatic components: pyruvate dehydrogenase (E1), dihydrolipoamide acetyltransferase (E2) and lipoamide dehydrogenase (E3). FAD serves as cofactor. S-nytrosylated at unknown positions. As to expression, preferentially expressed in leaves, flowers and siliques and at a lower level in roots and stems.

It is found in the mitochondrion matrix. The catalysed reaction is N(6)-[(R)-dihydrolipoyl]-L-lysyl-[protein] + NAD(+) = N(6)-[(R)-lipoyl]-L-lysyl-[protein] + NADH + H(+). In terms of biological role, lipoamide dehydrogenase is a component of the glycine decarboxylase (GDC) or glycine cleavage system as well as of the alpha-ketoacid dehydrogenase complexes. LPD1 is probably the protein most often associated with the glycine decarboxylase complex while LPD2 is probably incorporated into alpha-ketoacid dehydrogenase complexes. The polypeptide is Dihydrolipoyl dehydrogenase 1, mitochondrial (LPD1) (Arabidopsis thaliana (Mouse-ear cress)).